The following is a 452-amino-acid chain: Asparagine--tRNA ligase (452 aa).

The protein belongs to the class-II aminoacyl-tRNA synthetase family. In terms of assembly, homodimer.

The protein resides in the cytoplasm. The catalysed reaction is tRNA(Asn) + L-asparagine + ATP = L-asparaginyl-tRNA(Asn) + AMP + diphosphate + H(+). This is Asparagine--tRNA ligase from Mycoplasma mycoides subsp. mycoides SC (strain CCUG 32753 / NCTC 10114 / PG1).